The following is a 431-amino-acid chain: Histidine--tRNA ligase (431 aa).

Belongs to the class-II aminoacyl-tRNA synthetase family. As to quaternary structure, homodimer.

The protein resides in the cytoplasm. It catalyses the reaction tRNA(His) + L-histidine + ATP = L-histidyl-tRNA(His) + AMP + diphosphate + H(+). The chain is Histidine--tRNA ligase from Neisseria meningitidis serogroup C / serotype 2a (strain ATCC 700532 / DSM 15464 / FAM18).